Consider the following 355-residue polypeptide: DNA polymerase IV (355 aa).

One can recognise a UmuC domain in the interval 7–188 (IIHIDMDCFY…LPLSKIPGVG (182 aa)). The Mg(2+) site is built by aspartate 11 and aspartate 106. Residue glutamate 107 is part of the active site.

This sequence belongs to the DNA polymerase type-Y family. Monomer. It depends on Mg(2+) as a cofactor.

The protein localises to the cytoplasm. It carries out the reaction DNA(n) + a 2'-deoxyribonucleoside 5'-triphosphate = DNA(n+1) + diphosphate. Functionally, poorly processive, error-prone DNA polymerase involved in untargeted mutagenesis. Copies undamaged DNA at stalled replication forks, which arise in vivo from mismatched or misaligned primer ends. These misaligned primers can be extended by PolIV. Exhibits no 3'-5' exonuclease (proofreading) activity. May be involved in translesional synthesis, in conjunction with the beta clamp from PolIII. The chain is DNA polymerase IV from Mannheimia succiniciproducens (strain KCTC 0769BP / MBEL55E).